A 366-amino-acid polypeptide reads, in one-letter code: MASAARSASRAFLRSTPTTSSFRPAVRAARFALPAQGFRAAGRRGYASEANSGKSSSNVFLWAGLAVAGGAGAYLYLNGSDSVTSKTFVPGKEDYQKVYDAIARRLADETDYDDGSYGPVLVRLAWHASGTYDKETGTGGSNGATMRFAPESDHGANAGLKIARDFLEPIKAQFPWISYSDLWTLAGACAIQELGGPTIPWRPGRQDKDVAACTPDGRLPDASKDQRHIRDIFYRMGFNDQEIVALIGAHALGRAHPDRSGYDGPWDFSPTVFTNEFFRLLVDEKWQNRKWNGPAQFTDKTTKTLMMLPADLALIKDKEFKKHVERYARDSDAFFKDFSDAFVKLLELGVPFTSKAEDRYVFKTSE.

The transit peptide at 1-46 (MASAARSASRAFLRSTPTTSSFRPAVRAARFALPAQGFRAAGRRGY) directs the protein to the mitochondrion. Catalysis depends on His127, which acts as the Proton acceptor. His250 contacts heme b. The active-site Tryptophan radical intermediate is the Trp266.

The protein belongs to the peroxidase family. Cytochrome c peroxidase subfamily. In terms of assembly, forms a one-to-one complex with cytochrome c. The cofactor is heme b.

It is found in the mitochondrion matrix. The protein localises to the mitochondrion intermembrane space. The enzyme catalyses 2 Fe(II)-[cytochrome c] + H2O2 + 2 H(+) = 2 Fe(III)-[cytochrome c] + 2 H2O. Functionally, destroys radicals which are normally produced within the cells and which are toxic to biological systems. The sequence is that of Cytochrome c peroxidase, mitochondrial (ccp1) from Aspergillus fumigatus (strain ATCC MYA-4609 / CBS 101355 / FGSC A1100 / Af293) (Neosartorya fumigata).